The sequence spans 205 residues: UPF0688 protein C1orf174 homolog (205 aa).

A compositionally biased stretch (basic residues) spans 1 to 18 (MRKRKLSDRVRCSARLKN). Disordered stretches follow at residues 1 to 128 (MRKR…PSKV) and 184 to 205 (AKEE…EGNI). A compositionally biased stretch (basic and acidic residues) spans 46–63 (NTDKKSPKKLENDEKGLM). Residues 71 to 108 (INKTDNTASNESNAGNVNTCPSASPFSDLNEVSRNGLT) are compositionally biased toward polar residues. A compositionally biased stretch (acidic residues) spans 187–196 (EEEDDDDDYA).

It belongs to the UPF0688 family.

Its subcellular location is the nucleus. In Xenopus laevis (African clawed frog), this protein is UPF0688 protein C1orf174 homolog.